Reading from the N-terminus, the 246-residue chain is Uridylate kinase (246 aa).

18–21 is an ATP binding site; sequence KLSG. Gly60 lines the UMP pocket. Gly61 and Arg65 together coordinate ATP. UMP contacts are provided by residues Asp80 and 141–148; that span reads TGNPFFTT. Positions 168, 174, and 177 each coordinate ATP.

The protein belongs to the UMP kinase family. As to quaternary structure, homohexamer.

The protein localises to the cytoplasm. The enzyme catalyses UMP + ATP = UDP + ADP. Its pathway is pyrimidine metabolism; CTP biosynthesis via de novo pathway; UDP from UMP (UMPK route): step 1/1. Inhibited by UTP. Catalyzes the reversible phosphorylation of UMP to UDP. The chain is Uridylate kinase from Pseudomonas syringae pv. syringae (strain B728a).